Consider the following 241-residue polypeptide: Chromosome partition protein MukE (241 aa).

The interval 207 to 241 (DGEAATPDSLSQEKSAVKNDEEIEDELDEGLGEEE) is disordered. Acidic residues predominate over residues 227–241 (EEIEDELDEGLGEEE).

Belongs to the MukE family. As to quaternary structure, interacts, and probably forms a ternary complex, with MukF and MukB. The complex formation is stimulated by calcium or magnesium.

The protein resides in the cytoplasm. The protein localises to the nucleoid. Functionally, involved in chromosome condensation, segregation and cell cycle progression. May participate in facilitating chromosome segregation by condensation DNA from both sides of a centrally located replisome during cell division. Probably acts via its interaction with MukB and MukF. This Mannheimia succiniciproducens (strain KCTC 0769BP / MBEL55E) protein is Chromosome partition protein MukE.